A 334-amino-acid polypeptide reads, in one-letter code: Holliday junction branch migration complex subunit RuvB (334 aa).

The tract at residues 1–182 is large ATPase domain (RuvB-L); sequence MDDRMVDQSM…FGVHLRLEYY (182 aa). ATP contacts are provided by residues Leu-21, Arg-22, Gly-63, Lys-66, Thr-67, Thr-68, 129–131, Arg-172, Tyr-182, and Arg-219; that span reads EDF. Thr-67 contributes to the Mg(2+) binding site. The interval 183 to 253 is small ATPAse domain (RuvB-S); the sequence is QELELKEIIV…TTRASLQLLQ (71 aa). The tract at residues 256 to 334 is head domain (RuvB-H); that stretch reads DEGLDYIDHK…HFSKKNGKKE (79 aa). DNA contacts are provided by Arg-292, Arg-311, and Arg-316.

The protein belongs to the RuvB family. Homohexamer. Forms an RuvA(8)-RuvB(12)-Holliday junction (HJ) complex. HJ DNA is sandwiched between 2 RuvA tetramers; dsDNA enters through RuvA and exits via RuvB. An RuvB hexamer assembles on each DNA strand where it exits the tetramer. Each RuvB hexamer is contacted by two RuvA subunits (via domain III) on 2 adjacent RuvB subunits; this complex drives branch migration. In the full resolvosome a probable DNA-RuvA(4)-RuvB(12)-RuvC(2) complex forms which resolves the HJ.

It localises to the cytoplasm. The catalysed reaction is ATP + H2O = ADP + phosphate + H(+). Its function is as follows. The RuvA-RuvB-RuvC complex processes Holliday junction (HJ) DNA during genetic recombination and DNA repair, while the RuvA-RuvB complex plays an important role in the rescue of blocked DNA replication forks via replication fork reversal (RFR). RuvA specifically binds to HJ cruciform DNA, conferring on it an open structure. The RuvB hexamer acts as an ATP-dependent pump, pulling dsDNA into and through the RuvAB complex. RuvB forms 2 homohexamers on either side of HJ DNA bound by 1 or 2 RuvA tetramers; 4 subunits per hexamer contact DNA at a time. Coordinated motions by a converter formed by DNA-disengaged RuvB subunits stimulates ATP hydrolysis and nucleotide exchange. Immobilization of the converter enables RuvB to convert the ATP-contained energy into a lever motion, pulling 2 nucleotides of DNA out of the RuvA tetramer per ATP hydrolyzed, thus driving DNA branch migration. The RuvB motors rotate together with the DNA substrate, which together with the progressing nucleotide cycle form the mechanistic basis for DNA recombination by continuous HJ branch migration. Branch migration allows RuvC to scan DNA until it finds its consensus sequence, where it cleaves and resolves cruciform DNA. The sequence is that of Holliday junction branch migration complex subunit RuvB from Staphylococcus saprophyticus subsp. saprophyticus (strain ATCC 15305 / DSM 20229 / NCIMB 8711 / NCTC 7292 / S-41).